We begin with the raw amino-acid sequence, 122 residues long: MSNLSRKQQTQKRHRRLRRHLNGTAQRPRLAVFRSNNHIYAQVIDDEAQNTLCAASTLDKDLRTSLKADGSSCDASNAVGDLVAKRALAKGIQQVVFDRGGNLYHGRVKSLADAAREAGLQF.

The segment at Met-1–Arg-27 is disordered. Residues Gln-9 to Leu-21 show a composition bias toward basic residues.

Belongs to the universal ribosomal protein uL18 family. As to quaternary structure, part of the 50S ribosomal subunit; part of the 5S rRNA/L5/L18/L25 subcomplex. Contacts the 5S and 23S rRNAs.

In terms of biological role, this is one of the proteins that bind and probably mediate the attachment of the 5S RNA into the large ribosomal subunit, where it forms part of the central protuberance. The polypeptide is Large ribosomal subunit protein uL18 (Prochlorococcus marinus (strain MIT 9303)).